A 75-amino-acid chain; its full sequence is MLEKAKIDRINELSKKKKAGTLTADEKVEQEKLRKEYIKSFRTHMKGTIENTTIIDPKGNDVTPHKIKQMRKNKK.

The segment at 55-75 is disordered; the sequence is IDPKGNDVTPHKIKQMRKNKK. Residues 65–75 show a composition bias toward basic residues; it reads HKIKQMRKNKK.

The protein belongs to the UPF0291 family.

The protein resides in the cytoplasm. The protein is UPF0291 protein lin1342 of Listeria innocua serovar 6a (strain ATCC BAA-680 / CLIP 11262).